Here is an 80-residue protein sequence, read N- to C-terminus: Small ribosomal subunit protein bS18 (80 aa).

It belongs to the bacterial ribosomal protein bS18 family. As to quaternary structure, part of the 30S ribosomal subunit. Forms a tight heterodimer with protein bS6.

Its function is as follows. Binds as a heterodimer with protein bS6 to the central domain of the 16S rRNA, where it helps stabilize the platform of the 30S subunit. This Methylocella silvestris (strain DSM 15510 / CIP 108128 / LMG 27833 / NCIMB 13906 / BL2) protein is Small ribosomal subunit protein bS18.